An 88-amino-acid polypeptide reads, in one-letter code: Molybdopterin synthase sulfur carrier subunit (88 aa).

Gly88 is subject to 1-thioglycine; alternate. Gly88 carries the glycyl adenylate; alternate modification.

The protein belongs to the MoaD family. MOCS2A subfamily. As to quaternary structure, heterotetramer; composed of 2 small (MOCS2A) and 2 large (MOCS2B) subunits. In terms of processing, C-terminal thiocarboxylation occurs in 2 steps, it is first acyl-adenylated (-COAMP) via the hesA/moeB/thiF part of MOCS3, then thiocarboxylated (-COSH) via the rhodanese domain of MOCS3. In terms of tissue distribution, widely expressed. Highest levels are found in heart and skeletal muscle. Lower levels are present in brain, kidney and pancreas. Very low levels are found in lung and peripheral blood leukocytes.

Its subcellular location is the cytoplasm. It is found in the cytosol. It participates in cofactor biosynthesis; molybdopterin biosynthesis. Acts as a sulfur carrier required for molybdopterin biosynthesis. Component of the molybdopterin synthase complex that catalyzes the conversion of precursor Z into molybdopterin by mediating the incorporation of 2 sulfur atoms into precursor Z to generate a dithiolene group. In the complex, serves as sulfur donor by being thiocarboxylated (-COSH) at its C-terminus by MOCS3. After interaction with MOCS2B, the sulfur is then transferred to precursor Z to form molybdopterin. The polypeptide is Molybdopterin synthase sulfur carrier subunit (Homo sapiens (Human)).